The primary structure comprises 451 residues: Tubby-like F-box protein 12 (451 aa).

An F-box domain is found at 57–112 (SRWVGLPPELLRDVMKRLEEGESNWPSRKDVVACAAVCRTWREICKDIVQSPEICG). A compositionally biased stretch (low complexity) spans 387–406 (LEQQQQQQQQNHASSSSSAS). The disordered stretch occupies residues 387 to 407 (LEQQQQQQQQNHASSSSSASD).

The protein belongs to the TUB family. Ubiquitous.

The chain is Tubby-like F-box protein 12 (TULP12) from Oryza sativa subsp. japonica (Rice).